Here is a 194-residue protein sequence, read N- to C-terminus: Phosphoheptose isomerase (194 aa).

One can recognise an SIS domain in the interval 37 to 194 (ISDSFKQGGK…LIEFEMAKDV (158 aa)). 52–54 (NGG) contacts substrate. H61 and E65 together coordinate Zn(2+). Residues E65, 93 to 94 (ND), 119 to 121 (STS), S124, and Q172 contribute to the substrate site. The Zn(2+) site is built by Q172 and H180.

Belongs to the SIS family. GmhA subfamily. Homotetramer. It depends on Zn(2+) as a cofactor.

Its subcellular location is the cytoplasm. The enzyme catalyses 2 D-sedoheptulose 7-phosphate = D-glycero-alpha-D-manno-heptose 7-phosphate + D-glycero-beta-D-manno-heptose 7-phosphate. It participates in carbohydrate biosynthesis; D-glycero-D-manno-heptose 7-phosphate biosynthesis; D-glycero-alpha-D-manno-heptose 7-phosphate and D-glycero-beta-D-manno-heptose 7-phosphate from sedoheptulose 7-phosphate: step 1/1. Its function is as follows. Catalyzes the isomerization of sedoheptulose 7-phosphate in D-glycero-D-manno-heptose 7-phosphate. The chain is Phosphoheptose isomerase from Actinobacillus succinogenes (strain ATCC 55618 / DSM 22257 / CCUG 43843 / 130Z).